A 98-amino-acid polypeptide reads, in one-letter code: Small ribosomal subunit protein bS6 (98 aa).

The protein belongs to the bacterial ribosomal protein bS6 family.

Binds together with bS18 to 16S ribosomal RNA. The polypeptide is Small ribosomal subunit protein bS6 (Lactobacillus helveticus (strain DPC 4571)).